The primary structure comprises 360 residues: 3-dehydroquinate synthase (360 aa).

Residues 70–75 (DGEKYK), 104–108 (GVIGD), 128–129 (TT), lysine 141, and lysine 150 contribute to the NAD(+) site. Zn(2+)-binding residues include glutamate 183, histidine 246, and histidine 263.

This sequence belongs to the sugar phosphate cyclases superfamily. Dehydroquinate synthase family. Co(2+) is required as a cofactor. It depends on Zn(2+) as a cofactor. The cofactor is NAD(+).

Its subcellular location is the cytoplasm. It carries out the reaction 7-phospho-2-dehydro-3-deoxy-D-arabino-heptonate = 3-dehydroquinate + phosphate. The protein operates within metabolic intermediate biosynthesis; chorismate biosynthesis; chorismate from D-erythrose 4-phosphate and phosphoenolpyruvate: step 2/7. Catalyzes the conversion of 3-deoxy-D-arabino-heptulosonate 7-phosphate (DAHP) to dehydroquinate (DHQ). This chain is 3-dehydroquinate synthase, found in Acinetobacter baumannii (strain SDF).